A 656-amino-acid polypeptide reads, in one-letter code: Pyoverdine export ATP-binding/permease protein PvdT (656 aa).

In terms of domain architecture, ABC transporter spans Ile6 to Val245. Residue Gly43–Ser50 participates in ATP binding. 4 helical membrane passes run Ala284 to Gly304, Ile538 to Val558, Leu589 to Leu609, and Leu619 to Met639.

Belongs to the ABC transporter superfamily. Macrolide exporter (TC 3.A.1.122) family. As to quaternary structure, part of the tripartite efflux system PvdRT-OpmQ, which is composed of an inner membrane component with both ATPase and permease domains, PvdT, a periplasmic membrane fusion protein, PvdR, and an outer membrane component, OpmQ.

It localises to the cell inner membrane. Part of the tripartite efflux system PvdRT-OpmQ required for the secretion into the extracellular milieu of the siderophore pyoverdine (PVD), which is involved in iron acquisition. This subunit binds PVD and drives its secretion by hydrolyzing ATP. The system is responsible for export of newly synthesized PVD after the final steps of biosynthesis have taken place in the periplasm. It is also responsible for recycling of PVD after internalization of ferri-PVD into the periplasm by the outer-membrane receptor FpvA and release of iron from PVD, thus making PVD available for new cycles of iron uptake. The sequence is that of Pyoverdine export ATP-binding/permease protein PvdT from Pseudomonas syringae pv. tomato (strain ATCC BAA-871 / DC3000).